A 485-amino-acid chain; its full sequence is UDP-N-acetylmuramate--L-alanine ligase (485 aa).

Position 120–126 (120–126 (GSHGKTT)) interacts with ATP.

This sequence belongs to the MurCDEF family.

Its subcellular location is the cytoplasm. The enzyme catalyses UDP-N-acetyl-alpha-D-muramate + L-alanine + ATP = UDP-N-acetyl-alpha-D-muramoyl-L-alanine + ADP + phosphate + H(+). It functions in the pathway cell wall biogenesis; peptidoglycan biosynthesis. Its function is as follows. Cell wall formation. This is UDP-N-acetylmuramate--L-alanine ligase from Rickettsia africae (strain ESF-5).